We begin with the raw amino-acid sequence, 506 residues long: Cytochrome P450 monooxygenase TES1 (506 aa).

A helical membrane pass occupies residues 26–46; that stretch reads MSVVLAGLILLASIYFPRFMF. N-linked (GlcNAc...) asparagine glycosylation is found at N167, N201, N298, and N427. C440 serves as a coordination point for heme.

Belongs to the cytochrome P450 family. Requires heme as cofactor.

The protein resides in the membrane. Its pathway is phytotoxin biosynthesis. Cytochrome P450 monooxygenase; part of the gene cluster that mediates the biosynthesis of the phytotoxin tentoxin, an inhibitor the F1-ATPase activity of chloroplasts, resulting in chlorosis in sensitive plants. Tentoxin is a cyclic tetrapeptide that consists of four amino acid residues: glycine (Gly), alanine (Ala), leucine (Leu), and dehydrophenylalanine (DPhe). In addition, both the Ala and DPhe residues are N-methylated. The nonribosomal peptide synthetase TES assembles tentoxin from the four substrate amino acids. The adenylation domains of each of the 4 modules are responsible for the activation of Gly, Ala, Leu and DPhe, respectively. In addition, the N-methyltransferase domains in the second and fourth modules of TES could be responsible for N-methylation of Ala and DPhe residues. Finally, the condensation domain located in the termination module probably catalyzes the formation of the intramolecular macrocyclization and then the release of tentoxin. The cytochrome P450 monooxygenase TES1 is predicted to be involved in the formation of DPhe. The chain is Cytochrome P450 monooxygenase TES1 from Alternaria alternata (Alternaria rot fungus).